We begin with the raw amino-acid sequence, 514 residues long: 1-pyrroline-5-carboxylate dehydrogenase (514 aa).

Catalysis depends on residues glutamate 286 and cysteine 320.

The protein belongs to the aldehyde dehydrogenase family. RocA subfamily.

It carries out the reaction L-glutamate 5-semialdehyde + NAD(+) + H2O = L-glutamate + NADH + 2 H(+). The protein operates within amino-acid degradation; L-proline degradation into L-glutamate; L-glutamate from L-proline: step 2/2. In Staphylococcus epidermidis (strain ATCC 12228 / FDA PCI 1200), this protein is 1-pyrroline-5-carboxylate dehydrogenase.